We begin with the raw amino-acid sequence, 572 residues long: ATP-dependent lipid A-core flippase (572 aa).

5 helical membrane-spanning segments follow: residues 14–34 (IIPY…VAAL), 55–75 (VFFL…KGVL), 148–168 (IFLL…CFLI), 249–269 (MEII…SEVI), and 272–292 (SATP…YDPV). The region spanning 22-304 (FIAMFAMIVV…VSQVNSTIQQ (283 aa)) is the ABC transmembrane type-1 domain. The ABC transporter domain maps to 338-571 (IEFHDVSFSY…EGEYQLLYNM (234 aa)). Residue 370-377 (GPSGGGKT) coordinates ATP.

It belongs to the ABC transporter superfamily. Lipid exporter (TC 3.A.1.106) family. In terms of assembly, homodimer.

It is found in the cell inner membrane. It catalyses the reaction ATP + H2O + lipid A-core oligosaccharideSide 1 = ADP + phosphate + lipid A-core oligosaccharideSide 2.. In terms of biological role, involved in lipopolysaccharide (LPS) biosynthesis. Translocates lipid A-core from the inner to the outer leaflet of the inner membrane. Transmembrane domains (TMD) form a pore in the inner membrane and the ATP-binding domain (NBD) is responsible for energy generation. In Desulfotalea psychrophila (strain LSv54 / DSM 12343), this protein is ATP-dependent lipid A-core flippase.